Here is a 343-residue protein sequence, read N- to C-terminus: Tribbles homolog 2 (343 aa).

The tract at residues 25 to 50 is disordered; sequence EELSSIRSAEPSQSFSPNLGSPSPPE. The span at 29–45 shows a compositional bias: polar residues; it reads SIRSAEPSQSFSPNLGS. The Protein kinase domain occupies 61–308; that stretch reads IGKYLLLEPL…SQEILDHPWF (248 aa).

This sequence belongs to the protein kinase superfamily. CAMK Ser/Thr protein kinase family. Tribbles subfamily. As to expression, expressed in granulosa cells of the dominant follicles of the ovary and down-regulated in ovulatory follicles.

The protein resides in the cytoplasm. Its subcellular location is the cytoskeleton. Functionally, interacts with MAPK kinases and regulates activation of MAP kinases. Does not display kinase activity. This Bos taurus (Bovine) protein is Tribbles homolog 2.